We begin with the raw amino-acid sequence, 466 residues long: Gamma-aminobutyric acid receptor subunit gamma-2 (466 aa).

Residues 1 to 38 (MSSPNTWSTGSTVYSPVFSQKMTLWILLLLSLYPGFTS) form the signal peptide. The Extracellular portion of the chain corresponds to 39-274 (QKSDDDYEDY…FDLSRRMGYF (236 aa)). N-linked (GlcNAc...) asparagine glycosylation is found at asparagine 51 and asparagine 128. Cysteines 189 and 203 form a disulfide. Asparagine 246 is a glycosylation site (N-linked (GlcNAc...) asparagine). The helical transmembrane segment at 275-295 (TIQTYIPCTLIVVLSWVSFWI) threads the bilayer. Over 296 to 301 (NKDAVP) the chain is Cytoplasmic. Residues 302-321 (ARTSLGITTVLTMTTLSTIA) form a helical membrane-spanning segment. Over 322–333 (RKSLPKVSYVTA) the chain is Extracellular. A helical membrane pass occupies residues 334-358 (MDLFVSVCFIFVFSALVEYGTLHYF). Over 359–442 (VSNRKPSKDK…IHIRIAKMDS (84 aa)) the chain is Cytoplasmic. Residues 443-463 (YARIFFPTAFCLFNLVYWVSY) traverse the membrane as a helical segment. Residues 464-466 (LYL) are Extracellular-facing.

This sequence belongs to the ligand-gated ion channel (TC 1.A.9) family. Gamma-aminobutyric acid receptor (TC 1.A.9.5) subfamily. GABRG2 sub-subfamily. In terms of assembly, heteropentamer, formed by a combination of alpha (GABRA1-6), beta (GABRB1-3), gamma (GABRG1-3), delta (GABRD), epsilon (GABRE), rho (GABRR1-3), pi (GABRP) and theta (GABRQ) chains, each subunit exhibiting distinct physiological and pharmacological properties. Interacts with GABARAP. Interacts with KIF21B. Identified in a complex of 720 kDa composed of LHFPL4, NLGN2, GABRA1, GABRB2, GABRG2 and GABRB3. Interacts with LHFPL4. Interacts with SHISA7; interaction leads to the regulation of GABA(A) receptor trafficking, channel deactivation kinetics and pharmacology. Post-translationally, palmitoylated by ZDHHC3/GODZ; required for the accumulation of GABA(A) receptors at the postsynaptic membrane of inhibitory GABAergic synapses. Glycosylated. As to expression, expressed in brain (at protein level). Expressed in lungs, in alveolar epithelium.

It localises to the postsynaptic cell membrane. The protein localises to the cell membrane. The protein resides in the cell projection. It is found in the dendrite. Its subcellular location is the cytoplasmic vesicle membrane. It carries out the reaction chloride(in) = chloride(out). With respect to regulation, allosterically activated by benzodiazepines. Activated by pentobarbital. Inhibited by the antagonist bicuculline. Inhibited by zinc ions. Potentiated by histamine. Gamma subunit of the heteropentameric ligand-gated chloride channel gated by gamma-aminobutyric acid (GABA), a major inhibitory neurotransmitter in the brain. GABA-gated chloride channels, also named GABA(A) receptors (GABAAR), consist of five subunits arranged around a central pore and contain GABA active binding site(s) located at the alpha and beta subunit interface(s). When activated by GABA, GABAARs selectively allow the flow of chloride anions across the cell membrane down their electrochemical gradient. Gamma-2/GABRG2-containing GABAARs are found at both synaptic and extrasynaptic sites. Chloride influx into the postsynaptic neuron following GABAAR opening decreases the neuron ability to generate a new action potential, thereby reducing nerve transmission. GABAARs containing alpha-1 and beta-2 or -3 subunits exhibit synaptogenic activity; the gamma-2 subunit being necessary but not sufficient to induce rapid synaptic contacts formation. Extrasynaptic gamma-2-containing receptors contribute to the tonic GABAergic inhibition. GABAARs function also as histamine receptor where histamine binds at the interface of two neighboring beta subunits and potentiates GABA response in a gamma-2 subunit-controlled manner. The protein is Gamma-aminobutyric acid receptor subunit gamma-2 of Rattus norvegicus (Rat).